The chain runs to 62 residues: Keratin-associated protein 8-1 (62 aa).

The 12 X 2 AA repeats of G-[YCGS] stretch occupies residues 12 to 53 (GCYWGSYGYPLGYSVGCGYGSTYSPVGYGFGYGYNGSGAFGC).

It belongs to the KRTAP type 8 family. As to quaternary structure, interacts with wool keratins. In terms of tissue distribution, wool.

In the wool cortex, wool keratin intermediate filaments are embedded in an interfilamentous matrix, consisting of hair keratin-associated proteins (KRTAP), which are essential for the formation of a rigid and resistant wool shaft through their extensive disulfide bond cross-linking with abundant cysteine residues of wool keratins. The matrix proteins include the high-sulfur and high-glycine-tyrosine keratins. This Ovis aries (Sheep) protein is Keratin-associated protein 8-1 (KRTAP8-1).